We begin with the raw amino-acid sequence, 340 residues long: Tryptophan--tRNA ligase (340 aa).

ATP-binding positions include 11–13 and 19–20; these read RPT and GH. The 'HIGH' region signature appears at 12–20; the sequence is PTGKLHLGH. L-tryptophan is bound at residue Asp-140. Residues 152–154, Leu-194, and 202–206 contribute to the ATP site; these read GND and KMSKS. Positions 202-206 match the 'KMSKS' region motif; it reads KMSKS.

Belongs to the class-I aminoacyl-tRNA synthetase family. Homodimer.

It localises to the cytoplasm. It catalyses the reaction tRNA(Trp) + L-tryptophan + ATP = L-tryptophyl-tRNA(Trp) + AMP + diphosphate + H(+). Its function is as follows. Catalyzes the attachment of tryptophan to tRNA(Trp). This is Tryptophan--tRNA ligase from Streptococcus mutans serotype c (strain ATCC 700610 / UA159).